The sequence spans 125 residues: Fluoride-specific ion channel FluC (125 aa).

4 helical membrane-spanning segments follow: residues 5–25 (ILAI…LALW), 37–57 (LAAN…FHLL), 71–91 (GFLG…TMLL), and 97–117 (VALL…WLGI). Residues Gly74 and Thr77 each coordinate Na(+).

Belongs to the fluoride channel Fluc/FEX (TC 1.A.43) family.

The protein resides in the cell inner membrane. The catalysed reaction is fluoride(in) = fluoride(out). Na(+) is not transported, but it plays an essential structural role and its presence is essential for fluoride channel function. Its function is as follows. Fluoride-specific ion channel. Important for reducing fluoride concentration in the cell, thus reducing its toxicity. The chain is Fluoride-specific ion channel FluC from Variovorax paradoxus (strain S110).